A 761-amino-acid polypeptide reads, in one-letter code: Semaphorin-3D (761 aa).

The N-terminal stretch at 1–24 is a signal peptide; it reads MRASQVPNACSLLSLAMLFFPVTG. Positions 32–519 constitute a Sema domain; sequence RLKLSYKDLL…SRDGLVQLSL (488 aa). Cys-105 and Cys-116 form a disulfide bridge. The N-linked (GlcNAc...) asparagine glycan is linked to Asn-127. Intrachain disulfides connect Cys-134/Cys-143, Cys-274/Cys-386, Cys-298/Cys-346, and Cys-522/Cys-540. The Ig-like C2-type domain maps to 552 to 670; the sequence is PTSKRRARRQ…IHTIVKLNLN (119 aa). Residue Asn-595 is glycosylated (N-linked (GlcNAc...) asparagine). A disulfide bond links Cys-653 and Cys-719. Basic residues predominate over residues 728–754; sequence RRQRNKGGAKWKHVQEMKKKRNRRHHE. Residues 728–761 are disordered; the sequence is RRQRNKGGAKWKHVQEMKKKRNRRHHEPARPPST.

This sequence belongs to the semaphorin family. In terms of tissue distribution, developing spinal cord and developing visual system. Collapsin-1, -2, -3, and -5 bind to overlapping but distinct axon tracts.

The protein localises to the secreted. Its function is as follows. Induces the collapse and paralysis of neuronal growth cones. Could potentially act as repulsive cues toward specific neuronal populations. Binds to neuropilin. The chain is Semaphorin-3D (SEMA3D) from Gallus gallus (Chicken).